Reading from the N-terminus, the 726-residue chain is Catalase-peroxidase (726 aa).

Positions 85–208 (WHSAGSYRIH…FAATEMGLIY (124 aa)) form a cross-link, tryptophyl-tyrosyl-methioninium (Trp-Tyr) (with M-234). His86 acts as the Proton acceptor in catalysis. A cross-link (tryptophyl-tyrosyl-methioninium (Tyr-Met) (with W-85)) is located at residues 208–234 (YVNPEGPMGNPDPSGSAKEIRLAFTRM). His249 provides a ligand contact to heme b.

This sequence belongs to the peroxidase family. Peroxidase/catalase subfamily. Homodimer or homotetramer. Heme b serves as cofactor. Formation of the three residue Trp-Tyr-Met cross-link is important for the catalase, but not the peroxidase activity of the enzyme.

It catalyses the reaction H2O2 + AH2 = A + 2 H2O. The enzyme catalyses 2 H2O2 = O2 + 2 H2O. Its function is as follows. Bifunctional enzyme with both catalase and broad-spectrum peroxidase activity. This Pseudothermotoga lettingae (strain ATCC BAA-301 / DSM 14385 / NBRC 107922 / TMO) (Thermotoga lettingae) protein is Catalase-peroxidase.